Consider the following 555-residue polypeptide: Glutamine--tRNA ligase (555 aa).

A 'HIGH' region motif is present at residues 34-44; it reads PEPNGYLHIGH. Residues 35-37 and 41-47 contribute to the ATP site; these read EPN and HIGHAKS. L-glutamine-binding residues include D67 and Y212. ATP-binding positions include T231, 261–262, and 269–271; these read RL and MSK. Residues 268–272 carry the 'KMSKS' region motif; sequence VMSKR. The interaction with tRNA stretch occupies residues 317 to 324; it reads TKQDNTIE.

It belongs to the class-I aminoacyl-tRNA synthetase family. As to quaternary structure, monomer.

The protein localises to the cytoplasm. The catalysed reaction is tRNA(Gln) + L-glutamine + ATP = L-glutaminyl-tRNA(Gln) + AMP + diphosphate. In Citrobacter koseri (strain ATCC BAA-895 / CDC 4225-83 / SGSC4696), this protein is Glutamine--tRNA ligase.